The sequence spans 73 residues: Translation initiation factor IF-1 (73 aa).

An S1-like domain is found at 1–73 (MAKKEDTIVL…TKARVVYRHR (73 aa)).

This sequence belongs to the IF-1 family. As to quaternary structure, component of the 30S ribosomal translation pre-initiation complex which assembles on the 30S ribosome in the order IF-2 and IF-3, IF-1 and N-formylmethionyl-tRNA(fMet); mRNA recruitment can occur at any time during PIC assembly.

It localises to the cytoplasm. Its function is as follows. One of the essential components for the initiation of protein synthesis. Stabilizes the binding of IF-2 and IF-3 on the 30S subunit to which N-formylmethionyl-tRNA(fMet) subsequently binds. Helps modulate mRNA selection, yielding the 30S pre-initiation complex (PIC). Upon addition of the 50S ribosomal subunit IF-1, IF-2 and IF-3 are released leaving the mature 70S translation initiation complex. The sequence is that of Translation initiation factor IF-1 from Chlamydia abortus (strain DSM 27085 / S26/3) (Chlamydophila abortus).